Consider the following 535-residue polypeptide: MGHQEELKPEQVDLKVTPFVGYLRRTWSDFCATSSIHGLKYTRDEDTNKIVHLVWLLISVVMFICAVVMARTFYMDYRSSPTRMNVESDNTPVNRLYFPPVTICPDVLFNMQKSEAFLNTLRLPKGAELRGILRKLHIFYGFMLDDERYSAEDIEQMEALLFLNNLTIPEFVEHLRWNCDEILYRCRFNGEIMDCSKIFQLSKTFFGHCCSFNLRQKGWVNNKLNNLESFKVFHLNSLNFTAQRAIGGLRYGLSVVVRYKDDNYDPLQSYSYGVKLLIQEADAFPSAHSAAKFIAFNSETFAAVRPQETFCSSAVKALIIEERNCVFQNEFPMRYFSDYVYPNCELNCRVTNMVKFCGCHTYFFDFNRTSDRICTFRDIPCLVDNFANIITRKKSTQCYCPLTCEHIDYDVQLTNFPLELNMPVADKFYSGLAKNDGVLHVFINSFSYRRLRRDLLSNMVTLVSNLGSAFSLFVGMSMLSVVEIIYYFSVILRKNYKLECETRSQMLHKKPKFAWPKANDTHSKEQKSVFIIHKS.

Residues 1-49 (MGHQEELKPEQVDLKVTPFVGYLRRTWSDFCATSSIHGLKYTRDEDTNK) lie on the Cytoplasmic side of the membrane. A helical transmembrane segment spans residues 50-70 (IVHLVWLLISVVMFICAVVMA). Residues 71–471 (RTFYMDYRSS…LVSNLGSAFS (401 aa)) are Extracellular-facing. Asparagine 165, asparagine 239, and asparagine 367 each carry an N-linked (GlcNAc...) asparagine glycan. A helical transmembrane segment spans residues 472-492 (LFVGMSMLSVVEIIYYFSVIL). Residues 493 to 535 (RKNYKLECETRSQMLHKKPKFAWPKANDTHSKEQKSVFIIHKS) are Cytoplasmic-facing.

It belongs to the amiloride-sensitive sodium channel (TC 1.A.6) family. Embryonic and larval tracheal system; dorsal trunk (but not at fusion with transverse connective), several branches and terminal cells. Also expressed in adult tracheal system; dorsal trunk, but not at the spiracles.

Its subcellular location is the membrane. Its function is as follows. Part of a complex that plays a role in tracheal liquid clearance. Probable role in sodium transport. The chain is Sodium channel protein Nach (Nach) from Drosophila melanogaster (Fruit fly).